The following is an 86-amino-acid chain: Large ribosomal subunit protein eL43 (86 aa).

Positions 38, 41, 56, and 59 each coordinate Zn(2+). The C4-type zinc-finger motif lies at 38-59 (CPVCGRKAVRRISTGIWQCQKC).

This sequence belongs to the eukaryotic ribosomal protein eL43 family. As to quaternary structure, part of the 50S ribosomal subunit. Requires Zn(2+) as cofactor.

The protein is Large ribosomal subunit protein eL43 of Thermococcus kodakarensis (strain ATCC BAA-918 / JCM 12380 / KOD1) (Pyrococcus kodakaraensis (strain KOD1)).